A 110-amino-acid polypeptide reads, in one-letter code: Urease subunit beta (110 aa).

It belongs to the urease beta subunit family. In terms of assembly, heterotrimer of UreA (gamma), UreB (beta) and UreC (alpha) subunits. Three heterotrimers associate to form the active enzyme.

The protein resides in the cytoplasm. The catalysed reaction is urea + 2 H2O + H(+) = hydrogencarbonate + 2 NH4(+). It functions in the pathway nitrogen metabolism; urea degradation; CO(2) and NH(3) from urea (urease route): step 1/1. This Pseudoalteromonas translucida (strain TAC 125) protein is Urease subunit beta.